A 334-amino-acid polypeptide reads, in one-letter code: ADP-L-glycero-D-manno-heptose-6-epimerase (334 aa).

NADP(+) contacts are provided by residues 11–12 (FI), 32–33 (DN), Lys-39, Lys-54, 77–81 (QGACS), and Asn-94. Tyr-141 acts as the Proton acceptor in catalysis. Lys-145 is an NADP(+) binding site. Position 171 (Asn-171) interacts with substrate. NADP(+) is bound by residues Val-172 and Lys-180. Lys-180 (proton acceptor) is an active-site residue. Substrate-binding positions include Arg-182, His-189, 203–206 (FGSN), Arg-216, and Tyr-295.

It belongs to the NAD(P)-dependent epimerase/dehydratase family. HldD subfamily. In terms of assembly, homopentamer. NADP(+) is required as a cofactor.

It catalyses the reaction ADP-D-glycero-beta-D-manno-heptose = ADP-L-glycero-beta-D-manno-heptose. It participates in nucleotide-sugar biosynthesis; ADP-L-glycero-beta-D-manno-heptose biosynthesis; ADP-L-glycero-beta-D-manno-heptose from D-glycero-beta-D-manno-heptose 7-phosphate: step 4/4. Its function is as follows. Catalyzes the interconversion between ADP-D-glycero-beta-D-manno-heptose and ADP-L-glycero-beta-D-manno-heptose via an epimerization at carbon 6 of the heptose. This Neisseria gonorrhoeae (strain ATCC 700825 / FA 1090) protein is ADP-L-glycero-D-manno-heptose-6-epimerase.